Here is a 65-residue protein sequence, read N- to C-terminus: Large ribosomal subunit protein uL29 (65 aa).

This sequence belongs to the universal ribosomal protein uL29 family.

In Dehalococcoides mccartyi (strain ATCC BAA-2266 / KCTC 15142 / 195) (Dehalococcoides ethenogenes (strain 195)), this protein is Large ribosomal subunit protein uL29.